The sequence spans 846 residues: MSASAARSRNKQSKLRDDEQLDISKDEFNRIQEAFGREEFRKLFFDYVEEIQDPENRKIYEEEITQLEKERGVEVRFIHPKPGFVIKTALDGELKCFINIAGSEEIERPKNEVATDPSSGSRGLSWSIPMAQTSSRDDCDAKNNHCKVFDVVFHPDALHLAKRNKQFRQCLIDTALDAVEREYKVSLDRANLKFPKLDYKGIPRPTVIRKLADNPTAEEQEPHPLAHMFPTKPPAPGKPEPRVLPMKTKPTPVPEFTVPRYSIKHSHDVDLSEYTDELDAKLHVTVPRSLVVEIELPLLRSTAECQLDVTSKSVYLFSERQGAKYRLKLDLPFSVDDKAGQARFDTDMRRLSITLPVVRKSTKEEAQMHDTLRHFSREDSGVELHSNSESPVEEDPDGELSDSKADISEISSPTTATVRLANSPFLKNSVHYQLPSKFDCNVLDNVMAFVLHVPNVQPDSIEQLREQRSLHLQFATIGSGYYPTHYAFYVELPAEHEDSAIESVEAEAWDNNVVLKLCLSSQSETPASYLAGLDATELKEYPVHGQYNVKSSGKANAKENAPLDVKFVHNQEGQALKVTIRPGTKEEEEKGNQDQEPESDKQHQQQSQNKKAGKKQRKRNKKERSLSESACADMIFQEPLAKNPELQPKTMFKFPSQRKQRSYSECNDSIGGSHRGILKRFSRYGPRPSMSDSCSSIDDCSSYSCSVDASGTSLFSHSFGGIPEEDRSDAGLSESCKKTVRFNDHIMKQVFRLDSSILGQRKKNQKRRDLKLRAQQRRLSEGDSVDYEETRGSALKQQENQSRNCNKPNGGSVLHDSGLDLTGAPGAHSNHNESEAKNALMFEMDD.

Disordered stretches follow at residues 216 to 240, 372 to 405, 574 to 631, and 762 to 846; these read TAEE…GKPE, LRHF…DSKA, QALK…ESAC, and KKNQ…EMDD. Over residues 372–382 the composition is skewed to basic and acidic residues; sequence LRHFSREDSGV. S380 bears the Phosphoserine mark. A compositionally biased stretch (acidic residues) spans 391–400; sequence PVEEDPDGEL. Residues 583 to 603 are compositionally biased toward basic and acidic residues; the sequence is GTKEEEEKGNQDQEPESDKQH. 2 stretches are compositionally biased toward basic residues: residues 611–622 and 762–776; these read KAGKKQRKRNKK and KKNQ…RAQQ. S780 carries the post-translational modification Phosphoserine. Polar residues predominate over residues 795–809; that stretch reads LKQQENQSRNCNKPN.

It belongs to the PIH1 family. Kintoun subfamily. Interacts with Pp1alpha-96A, Pp1-87B, Pp1-13C and flw.

It is found in the cytoplasm. In terms of biological role, required for cytoplasmic pre-assembly of axonemal dyneins, thereby playing a central role in motility in cilia and flagella. Involved in pre-assembly of dynein arm complexes in the cytoplasm before intraflagellar transport loads them for the ciliary compartment. The protein is Protein kintoun of Drosophila yakuba (Fruit fly).